Reading from the N-terminus, the 439-residue chain is Tol-Pal system protein TolB (439 aa).

An N-terminal signal peptide occupies residues 1–24 (MRNGMRKIIAGVFIFVFLISNLYA).

Belongs to the TolB family. The Tol-Pal system is composed of five core proteins: the inner membrane proteins TolA, TolQ and TolR, the periplasmic protein TolB and the outer membrane protein Pal. They form a network linking the inner and outer membranes and the peptidoglycan layer.

The protein localises to the periplasm. Functionally, part of the Tol-Pal system, which plays a role in outer membrane invagination during cell division and is important for maintaining outer membrane integrity. The protein is Tol-Pal system protein TolB of Francisella tularensis subsp. tularensis (strain FSC 198).